We begin with the raw amino-acid sequence, 538 residues long: Nicotinate phosphoribosyltransferase (538 aa).

Residues Y21 and T210 each coordinate nicotinate. H213 bears the Phosphohistidine mark. R318 contacts nicotinate. T380 is a 5-phospho-alpha-D-ribose 1-diphosphate binding site.

It belongs to the NAPRTase family. In terms of assembly, homodimer. Mg(2+) serves as cofactor. The cofactor is Mn(2+). Post-translationally, transiently phosphorylated on a His residue during the reaction cycle. Phosphorylation strongly increases the affinity for substrates and increases the rate of nicotinate D-ribonucleotide production. Dephosphorylation regenerates the low-affinity form of the enzyme, leading to product release. As to expression, abundantly expressed in the small intestine, liver and kidney.

It localises to the cytoplasm. The protein localises to the cytosol. The catalysed reaction is nicotinate + 5-phospho-alpha-D-ribose 1-diphosphate + ATP + H2O = nicotinate beta-D-ribonucleotide + ADP + phosphate + diphosphate. It functions in the pathway cofactor biosynthesis; NAD(+) biosynthesis; nicotinate D-ribonucleotide from nicotinate: step 1/1. Catalyzes the first step in the biosynthesis of NAD from nicotinic acid, the ATP-dependent synthesis of beta-nicotinate D-ribonucleotide from nicotinate and 5-phospho-D-ribose 1-phosphate. Helps prevent cellular oxidative stress via its role in NAD biosynthesis. This Mus musculus (Mouse) protein is Nicotinate phosphoribosyltransferase (Naprt).